The sequence spans 467 residues: Mothers against decapentaplegic homolog 2 (467 aa).

At Ser2 the chain carries N-acetylserine. Residue Thr8 is modified to Phosphothreonine. In terms of domain architecture, MH1 spans 10 to 176; sequence PVVKRLLGWK…YQRVETPVLP (167 aa). Position 19 is an N6-acetyllysine (Lys19). Residues Cys74, Cys149, Cys161, and His166 each contribute to the Zn(2+) site. Residues 207 to 217 show a composition bias toward polar residues; sequence PAGIEPQSNYI. Residues 207–251 form a disordered region; it reads PAGIEPQSNYIPETPPPGYISEDGETSDQQLNQSMDTGSPAELSP. A Phosphothreonine modification is found at Thr220. Residues 221-225 carry the PY-motif motif; it reads PPPGY. Polar residues predominate over residues 233–243; sequence SDQQLNQSMDT. Ser240 carries the post-translational modification Phosphoserine; by CAMK2. A phosphoserine mark is found at Ser245, Ser250, Ser255, Ser458, Ser460, and Ser464. Positions 274–467 constitute an MH2 domain; sequence WCSIAYYELN…SPSVRCSSMS (194 aa). Residues Ser465 and Ser467 each carry the phosphoserine; by TGFBR1 modification.

Belongs to the dwarfin/SMAD family. In terms of assembly, monomer; in the absence of TGF-beta. Heterodimer; in the presence of TGF-beta. Forms a heterodimer with co-SMAD, SMAD4, in the nucleus to form the transactivation complex SMAD2/SMAD4. Found in a complex with SMAD3 and TRIM33 upon addition of TGF-beta. Identified in a complex that contains at least ZNF451, SMAD2, SMAD3 and SMAD4. Interacts (via the MH2 domain) with ZFYVE9; may form trimers with the SMAD4 co-SMAD. Interacts with TAZ/WWRT1. Interacts with FOXH1. Interacts with SNW1. Interacts with CREB-binding protein (CBP) and EP300. Interacts with SNON. Interacts with ALK4/ACVR1B. Interacts with SKOR1. Interacts with SKOR2. Interacts with PRDM16. Interacts (via MH2 domain) with LEMD3. Interacts with RBPMS. Interacts with WWP1. Interacts (dephosphorylated form, via the MH1 and MH2 domains) with RANBP3 (via its C-terminal R domain); the interaction results in the export of dephosphorylated SMAD3 out of the nucleus and termination of the TGF-beta signaling. Interacts with PDPK1 (via PH domain). Interacts with DAB2; the interactions are enhanced upon TGF-beta stimulation. Interacts with USP15. Interacts with PPP5C. Interacts with LDLRAD4 (via the SMAD interaction motif). Interacts (via MH2 domain) with PMEPA1 (via the SMAD interaction motif). Interacts with ZFHX3. Interacts with ZNF451. Interacts with SMURF2 when phosphorylated on Ser-465/467. Interacts with PPM1A. Interacts with TGF-beta. Interacts with TGFBR1. Interacts with TGIF. Interacts with SMAD3 and TRIM33. Interacts with ZNF580. Interacts with NEDD4L in response to TGF-beta. Interacts with HGS. Interacts with AIP1. Interacts with WWP1. Interacts with PML. Interacts weakly with ZNF8. Interacts (when phosphorylated) with RNF111; RNF111 acts as an enhancer of the transcriptional responses by mediating ubiquitination and degradation of SMAD2 inhibitors. Interacts with YAP1 (when phosphorylated at 'Ser-112'). Interacts when phosphorylated with IPO7; the interaction facilitates translocation of SMAD2 to the nucleus. Interacts with MTMR4; negatively regulates TGF-beta signaling through SMAD2 dephosphorylation and retention in endosomes. In terms of processing, in response to TGF-beta, phosphorylated on the C-terminal SXS motif by TGF-beta and activin type 1 receptor kinases, phosphorylation declines progressively in a KMT5A-dependent manner. Phosphorylation in this motif is required for interaction with a number of proteins including SMURF2, SNON and SMAD4 in response to TGF-beta. Dephosphorylated in this motif by PPM1A leading to disruption of the SMAD2/3-SMAD4 complex, nuclear export and termination of the TGF-beta signaling. In response to decorin, the naturally occurring inhibitor of TGF-beta signaling, phosphorylated on Ser-240 by CaMK2. Phosphorylated by MAPK3 upon EGF stimulation; which increases transcriptional activity and stability, and is blocked by calmodulin. Phosphorylated by PDPK1. Post-translationally, acetylated on Lys-19 by coactivators in response to TGF-beta signaling, which increases transcriptional activity. In response to TGF-beta, ubiquitinated by NEDD4L; which promotes its degradation. Monoubiquitinated, leading to prevent DNA-binding. Deubiquitination by USP15 alleviates inhibition and promotes activation of TGF-beta target genes. Ubiquitinated by RNF111, leading to its degradation: only SMAD2 proteins that are 'in use' are targeted by RNF111, RNF111 playing a key role in activating SMAD2 and regulating its turnover. As to expression, expressed in cardiomyocytes.

The protein resides in the cytoplasm. It is found in the nucleus. Receptor-regulated SMAD (R-SMAD) that is an intracellular signal transducer and transcriptional modulator activated by TGF-beta (transforming growth factor) and activin type 1 receptor kinases. Binds the TRE element in the promoter region of many genes that are regulated by TGF-beta and, on formation of the SMAD2/SMAD4 complex, activates transcription. Promotes TGFB1-mediated transcription of odontoblastic differentiation genes in dental papilla cells. Positively regulates PDPK1 kinase activity by stimulating its dissociation from the 14-3-3 protein YWHAQ which acts as a negative regulator. This Rattus norvegicus (Rat) protein is Mothers against decapentaplegic homolog 2 (Smad2).